The chain runs to 118 residues: Large ribosomal subunit protein uL18 (118 aa).

This sequence belongs to the universal ribosomal protein uL18 family. Part of the 50S ribosomal subunit; part of the 5S rRNA/L5/L18/L25 subcomplex. Contacts the 5S and 23S rRNAs.

Functionally, this is one of the proteins that bind and probably mediate the attachment of the 5S RNA into the large ribosomal subunit, where it forms part of the central protuberance. The sequence is that of Large ribosomal subunit protein uL18 from Campylobacter jejuni subsp. jejuni serotype O:2 (strain ATCC 700819 / NCTC 11168).